We begin with the raw amino-acid sequence, 739 residues long: Phosphoribosylformylglycinamidine synthase subunit PurL (739 aa).

Residue His54 is part of the active site. Tyr57 and Lys96 together coordinate ATP. Glu98 contributes to the Mg(2+) binding site. Residues 99 to 102 and Arg121 contribute to the substrate site; that span reads SHNH. Catalysis depends on His100, which acts as the Proton acceptor. Position 122 (Asp122) interacts with Mg(2+). Position 245 (Gln245) interacts with substrate. Asp273 serves as a coordination point for Mg(2+). Residue 317 to 319 participates in substrate binding; it reads ESQ. 2 residues coordinate ATP: Asp500 and Gly537. Asn538 lines the Mg(2+) pocket. Ser540 contacts substrate.

This sequence belongs to the FGAMS family. Monomer. Part of the FGAM synthase complex composed of 1 PurL, 1 PurQ and 2 PurS subunits.

The protein localises to the cytoplasm. The catalysed reaction is N(2)-formyl-N(1)-(5-phospho-beta-D-ribosyl)glycinamide + L-glutamine + ATP + H2O = 2-formamido-N(1)-(5-O-phospho-beta-D-ribosyl)acetamidine + L-glutamate + ADP + phosphate + H(+). The protein operates within purine metabolism; IMP biosynthesis via de novo pathway; 5-amino-1-(5-phospho-D-ribosyl)imidazole from N(2)-formyl-N(1)-(5-phospho-D-ribosyl)glycinamide: step 1/2. Part of the phosphoribosylformylglycinamidine synthase complex involved in the purines biosynthetic pathway. Catalyzes the ATP-dependent conversion of formylglycinamide ribonucleotide (FGAR) and glutamine to yield formylglycinamidine ribonucleotide (FGAM) and glutamate. The FGAM synthase complex is composed of three subunits. PurQ produces an ammonia molecule by converting glutamine to glutamate. PurL transfers the ammonia molecule to FGAR to form FGAM in an ATP-dependent manner. PurS interacts with PurQ and PurL and is thought to assist in the transfer of the ammonia molecule from PurQ to PurL. The chain is Phosphoribosylformylglycinamidine synthase subunit PurL from Bacillus cereus (strain ZK / E33L).